A 1237-amino-acid polypeptide reads, in one-letter code: Cilia- and flagella-associated protein 61 (1237 aa).

Positions 278–301 (QDLSVRRSQDAELRSSSQGSQKIV) are disordered. Over residues 281–290 (SVRRSQDAEL) the composition is skewed to basic and acidic residues.

In terms of assembly, component of axonemal radial spokes, the protein complexes that link the outer microtubule doublets with the central pair of microtubules. Interacts with CFAP91/MAATS1, ODAD2/ARMC4, RSPH3A, ROPN1, ROPN1L and RSPH9. Interacts with DYNLT1, DYNC1I2 and TUBB3. Interacts with WDR35, IFT22 and IFT81.

The protein localises to the cytoplasm. It localises to the cytoskeleton. Its subcellular location is the flagellum axoneme. Its function is as follows. Involved in sperm flagellum assembly. Plays an essential role in the formation of the radial spokes in flagellum axoneme. The sequence is that of Cilia- and flagella-associated protein 61 from Homo sapiens (Human).